We begin with the raw amino-acid sequence, 125 residues long: Cytochrome c oxidase assembly factor 6 homolog (125 aa).

Gly-2 is subject to N-acetylalanine. One can recognise a CHCH domain in the interval Arg-55–Phe-98. Residues Cys-58–Cys-68 carry the Cx9C motif motif. 2 disulfide bridges follow: Cys-58–Cys-90 and Cys-68–Cys-79. The Cx10C motif motif lies at Cys-79 to Cys-90.

The protein belongs to the cytochrome c oxidase subunit 6B family. In terms of assembly, interacts with COA1. Found in a complex with TMEM177, COX20, MT-CO2/COX2, COX18, SCO1 and SCO2. Interacts with MT-CO2/COX2 and SCO2. Interacts with SCO1. Interacts with COX20 in a MT-CO2/COX2- and COX18-dependent manner. Interacts with COX16.

The protein resides in the mitochondrion intermembrane space. Functionally, involved in the maturation of the mitochondrial respiratory chain complex IV subunit MT-CO2/COX2. Thereby, may regulate early steps of complex IV assembly. Mitochondrial respiratory chain complex IV or cytochrome c oxidase is the component of the respiratory chain that catalyzes the transfer of electrons from intermembrane space cytochrome c to molecular oxygen in the matrix and as a consequence contributes to the proton gradient involved in mitochondrial ATP synthesis. May also be required for efficient formation of respiratory supercomplexes comprised of complexes III and IV. The polypeptide is Cytochrome c oxidase assembly factor 6 homolog (COA6) (Homo sapiens (Human)).